Here is a 311-residue protein sequence, read N- to C-terminus: Dehydrogenase/reductase SDR family member 7C (311 aa).

A signal peptide spans 1-18; sequence MGIMAVLMLPLLLLGVSG. Residues serine 47, leucine 49, tyrosine 191, lysine 195, and serine 226 each coordinate NAD(+). Tyrosine 191 functions as the Proton acceptor in the catalytic mechanism.

It belongs to the short-chain dehydrogenases/reductases (SDR) family. Expressed in skeletal muscle, cardiac muscle and skin.

The protein localises to the sarcoplasmic reticulum membrane. The catalysed reaction is all-trans-retinol + NAD(+) = all-trans-retinal + NADH + H(+). NADH-dependent oxidoreductase which catalyzes the oxidation of all-trans-retinol to all-trans-retinal. Plays a role in the regulation of cardiac and skeletal muscle metabolic functions. Maintains Ca(2+) intracellular homeostasis by repressing Ca(2+) release from the sarcoplasmic reticulum (SR) in myotubes, possibly through local alternations in NAD/NADH or retinol/retinal. Also plays a role in Ca(2+) homeostasis by controlling Ca(2+) overload in the cytosol and the SR in myotubes. Involved in glucose uptake into skeletal muscles and muscle performance by activating PI3K and mTORC2-mediated AKT1 phosphorylation signaling pathways, possibly through the action of its downstream catalytic product all-trans-retinoic acid. The sequence is that of Dehydrogenase/reductase SDR family member 7C from Rattus norvegicus (Rat).